Consider the following 880-residue polypeptide: Alanine--tRNA ligase (880 aa).

4 residues coordinate Zn(2+): H558, H562, C663, and H667.

It belongs to the class-II aminoacyl-tRNA synthetase family. Zn(2+) serves as cofactor.

Its subcellular location is the cytoplasm. It catalyses the reaction tRNA(Ala) + L-alanine + ATP = L-alanyl-tRNA(Ala) + AMP + diphosphate. Its function is as follows. Catalyzes the attachment of alanine to tRNA(Ala) in a two-step reaction: alanine is first activated by ATP to form Ala-AMP and then transferred to the acceptor end of tRNA(Ala). Also edits incorrectly charged Ser-tRNA(Ala) and Gly-tRNA(Ala) via its editing domain. The polypeptide is Alanine--tRNA ligase (Mycoplasmopsis agalactiae (strain NCTC 10123 / CIP 59.7 / PG2) (Mycoplasma agalactiae)).